A 171-amino-acid polypeptide reads, in one-letter code: NADH-quinone oxidoreductase subunit C (171 aa).

This sequence belongs to the complex I 30 kDa subunit family. NDH-1 is composed of 14 different subunits. Subunits NuoB, C, D, E, F, and G constitute the peripheral sector of the complex.

The protein resides in the cell membrane. It carries out the reaction a quinone + NADH + 5 H(+)(in) = a quinol + NAD(+) + 4 H(+)(out). NDH-1 shuttles electrons from NADH, via FMN and iron-sulfur (Fe-S) centers, to quinones in the respiratory chain. The immediate electron acceptor for the enzyme in this species is believed to be ubiquinone. Couples the redox reaction to proton translocation (for every two electrons transferred, four hydrogen ions are translocated across the cytoplasmic membrane), and thus conserves the redox energy in a proton gradient. The polypeptide is NADH-quinone oxidoreductase subunit C (Herpetosiphon aurantiacus (strain ATCC 23779 / DSM 785 / 114-95)).